The sequence spans 186 residues: Large ribosomal subunit protein uL6 (186 aa).

Belongs to the universal ribosomal protein uL6 family. In terms of assembly, part of the 50S ribosomal subunit.

In terms of biological role, this protein binds to the 23S rRNA, and is important in its secondary structure. It is located near the subunit interface in the base of the L7/L12 stalk, and near the tRNA binding site of the peptidyltransferase center. The chain is Large ribosomal subunit protein uL6 from Sulfurisphaera tokodaii (strain DSM 16993 / JCM 10545 / NBRC 100140 / 7) (Sulfolobus tokodaii).